We begin with the raw amino-acid sequence, 459 residues long: MAGYLSESDFVMVEEGFSTRDLLEELTLGASQATSGKVAAFFVADLGAVVRKHFCFLKHLPRVRPFYAVGCNSSLGVLKVLAELGLGFSCANKAEMELVQHIGVPASKIICANPCKQVAQIKYAAKHGVRLLSFDNEVELAKVVKSHPSAKMVLCIATQDSHSLNHLSLRFGASLKSCRHLLENAKKSHVEVVGVSFHIGSGCPDPQAYAQSIADARLVFQMGEELGHTMNILDLGGGFPGLEGAKVRFEEMASVINSALDLYFPEGCGVDILAELGRYYVTSAFTVAVSIVAKREVLDQASREEQTGAAPKSIVYYLDEGVYGVFNSVLFDNTCPTPALQKKPSADQPLYSSSLWGPAVEGCDCVAEGLWLPQLQVGDWLVFDNMGAYTVDTKSLLGGTQARRVTYAMSRLAWEALRGQLLPAEEDQDAEGVCKPLSCGWEITDTLCVGPVFTPASIM.

A necessary for polyamine uptake stimulation region spans residues 117 to 140; that stretch reads QVAQIKYAAKHGVRLLSFDNEVEL.

It belongs to the Orn/Lys/Arg decarboxylase class-II family. ODC antizyme inhibitor subfamily. Monomer. Interacts with OAZ1, OAZ2 and OAZ3; this interaction disrupts the interaction between the antizyme and ODC1. Does not form a heterodimer with ODC1. Post-translationally, ubiquitinated, leading to its proteasomal degradation; a process that is reduced in presence of antizymes. May also be degraded through the lysosomal degradative pathway in a proteasomal-independent manner. Expressed in the medulla and chromaffin cells of the adrenal gland. Expressed in the Langerhans islets of the pancreas. Expressed in the inner part of the seminiferous tubules and in spermatozoa located in the lumen of the epididymis of the testis. Expressed in the cortex, hippocampus and cerebellum of the brain. Expressed in normal and neoplastic mast cells (MC) (at protein level). Expressed in testis, pancreas and brain. Expressed throughout the differentiation process from spermatids to spermatozoa in the inner part of the seminiferous tubules. Expressed in the kidney: expressed in the superficial (Cs) and the deep layer (Cd) of the cortex region and in the outer stripe (OS), inner stripe (IS) and the inner medulla papilla (IM) of the medulla region.

Its subcellular location is the nucleus. It localises to the cytoplasm. The protein localises to the perinuclear region. The protein resides in the membrane. It is found in the cytoplasmic vesicle. Its subcellular location is the endoplasmic reticulum-Golgi intermediate compartment. It localises to the golgi apparatus. The protein localises to the cis-Golgi network. The protein resides in the trans-Golgi network. It is found in the cytoplasmic granule. Its subcellular location is the cell projection. It localises to the axon. The protein localises to the dendrite. The protein resides in the perikaryon. Its function is as follows. Antizyme inhibitor (AZI) protein that positively regulates ornithine decarboxylase (ODC) activity and polyamine uptake. AZI is an enzymatically inactive ODC homolog that counteracts the negative effect of ODC antizymes (AZs) OAZ1, OAZ2 and OAZ3 on ODC activity by competing with ODC for antizyme-binding. Inhibits antizyme-dependent ODC degradation and releases ODC monomers from their inactive complex with antizymes, leading to formation of the catalytically active ODC homodimer and restoring polyamine production. Participates in the morphological integrity of the trans-Golgi network (TGN) and functions as a regulator of intracellular secretory vesicle trafficking. This Mus musculus (Mouse) protein is Antizyme inhibitor 2 (Azin2).